The primary structure comprises 510 residues: MVLLAAAVCTKAGKAIVSRQFVEMTRTRIEGLLAAFPKLMNTGKQHTFVETESVRYVYQPMEKLYMVLITTKNSNILEDLETLRLFSRVIPEYCRALEENEISEHCFDLIFAFDEIVALGYRENVNLAQIRTFTEMDSHEEKVFRAVRETQEREAKAEMRRKAKELQQARRDAERLGKKAPGFGGFGSSAVSGGTTAAMITETIIETEKPKVAPAPSRPSGPSKALKLGAKGKEVDNFVDKLKSEGENIMTSVGKRSTEAAKVLAPPINMESVHMKIEEKISLTCGRDGGLQNMELHGMIMLHISDEKFARIRLHVENEDKRGVQLQTHPNVDKKLFTAESQIGLKNPEKSFPINSDVGVLKWRLQTTEESFIPLTINCWPSESGNSCDVNIEYELQEESLELNDVVIMIPLPSGVGAPVIGEIDGEYRHDSRRNLLEWCLPVIDAKNKSGSLEFSIAGQPNDFFPVQVSFISKKNYCNIQVTKVTQVDGNSPVRFSTETTFLVDKYEIL.

The region spanning 270 to 510 is the MHD domain; that stretch reads MESVHMKIEE…TFLVDKYEIL (241 aa).

Belongs to the adaptor complexes medium subunit family. Delta-COP subfamily. As to quaternary structure, oligomeric complex that consists of at least the alpha, beta, beta', gamma, delta, epsilon and zeta subunits.

It is found in the cytoplasm. Its subcellular location is the golgi apparatus membrane. It localises to the cytoplasmic vesicle. The protein resides in the COPI-coated vesicle membrane. The coatomer is a cytosolic protein complex that binds to dilysine motifs and reversibly associates with Golgi non-clathrin-coated vesicles, which further mediate biosynthetic protein transport from the ER, via the Golgi up to the trans Golgi network. Coatomer complex is required for budding from Golgi membranes, and is essential for the retrograde Golgi-to-ER transport of dilysine-tagged proteins. In mammals, the coatomer can only be recruited by membranes associated to ADP-ribosylation factors (ARFs), which are small GTP-binding proteins; the complex also influences the Golgi structural integrity, as well as the processing, activity, and endocytic recycling of LDL receptors. The protein is Coatomer subunit delta (ARCN1) of Gallus gallus (Chicken).